The following is a 703-amino-acid chain: Protein FAR1-RELATED SEQUENCE 6 (703 aa).

Residues 1-29 (MERSESVDEDVQASAYLENDEVRERDDPM) are disordered. Positions 99–184 (NYYNCYASEV…TLDHNHLLGC (86 aa)) constitute an FAR1 domain. In terms of domain architecture, MULE spans 297–392 (VIFIDSSYIS…SLTHIMRKIP (96 aa)). The SWIM-type zinc-finger motif lies at 584–620 (FEVLYNRSVGEVRCICSCFNFYGYLCRHALCVLNFNG).

It belongs to the FHY3/FAR1 family. Expressed in hypocotyls, rosette and cauline leaves, inflorescences stems, flowers and siliques.

The protein localises to the nucleus. Functionally, putative transcription activator involved in regulating light control of development. May have a role in controlling flowering time. This chain is Protein FAR1-RELATED SEQUENCE 6 (FRS6), found in Arabidopsis thaliana (Mouse-ear cress).